We begin with the raw amino-acid sequence, 357 residues long: MTKLALFYRHLAVKGPCSPLEWLIFAFLLPLGWLYGAVMRLRALFYRIGWFDAYCADVPVISVGNLSVGGTGKTPVVDYLIRYCRSLDKRVAVVSRGYAGGKGAALRVVCAGQGPILDVQQAGDEPWLLARRNPAAIVIVAPHRAQGVRHAVENLGAEVVLLDDGFQHLAVSRDFDLVLLDALRPFGNGQVLPAGLLREPVSALRRGDLFVLTRCPEDLAGTADVPGPVVHCRHILEESAVDLDGEVRSLRELAGLRGIAFAGIAEPEGFFRELQSHGLTLTRTLHFSDHAAYDERAAILLKDAAKSGDYFITTEKDAVKLAHMTLPLPCFQVPLRLMFVETGQLEQKLSPIISNQR.

An ATP-binding site is contributed by 67–74 (SVGGTGKT).

Belongs to the LpxK family.

It carries out the reaction a lipid A disaccharide + ATP = a lipid IVA + ADP + H(+). Its pathway is glycolipid biosynthesis; lipid IV(A) biosynthesis; lipid IV(A) from (3R)-3-hydroxytetradecanoyl-[acyl-carrier-protein] and UDP-N-acetyl-alpha-D-glucosamine: step 6/6. In terms of biological role, transfers the gamma-phosphate of ATP to the 4'-position of a tetraacyldisaccharide 1-phosphate intermediate (termed DS-1-P) to form tetraacyldisaccharide 1,4'-bis-phosphate (lipid IVA). This Syntrophotalea carbinolica (strain DSM 2380 / NBRC 103641 / GraBd1) (Pelobacter carbinolicus) protein is Tetraacyldisaccharide 4'-kinase.